Here is a 204-residue protein sequence, read N- to C-terminus: IMPACT family member YigZ (204 aa).

This sequence belongs to the IMPACT family. In terms of assembly, monomer.

The polypeptide is IMPACT family member YigZ (yigZ) (Escherichia coli (strain K12)).